The chain runs to 228 residues: Octanoyltransferase (228 aa).

A BPL/LPL catalytic domain is found at 31–212; that stretch reads GETDGILILL…KFSEVFGIHF (182 aa). Substrate-binding positions include 76–83, 143–145, and 156–158; these read RGGKITFH, AIG, and GIA. The active-site Acyl-thioester intermediate is cysteine 174.

It belongs to the LipB family.

The protein localises to the cytoplasm. It catalyses the reaction octanoyl-[ACP] + L-lysyl-[protein] = N(6)-octanoyl-L-lysyl-[protein] + holo-[ACP] + H(+). Its pathway is protein modification; protein lipoylation via endogenous pathway; protein N(6)-(lipoyl)lysine from octanoyl-[acyl-carrier-protein]: step 1/2. Catalyzes the transfer of endogenously produced octanoic acid from octanoyl-acyl-carrier-protein onto the lipoyl domains of lipoate-dependent enzymes. Lipoyl-ACP can also act as a substrate although octanoyl-ACP is likely to be the physiological substrate. This Thermoanaerobacter pseudethanolicus (strain ATCC 33223 / 39E) (Clostridium thermohydrosulfuricum) protein is Octanoyltransferase.